A 443-amino-acid chain; its full sequence is MDSITMVETETLSKTLIKPSSPTPQSLSHYNLSYNDQNIYPEYIFAGFFYSNPDGHEISTIREQLQNSLSKTLVSYYPFAGKVVKNDYIHCNDDGIEFVDVRIHCRMNDILKPELRSYASELIRPNRSTVGSEDSTALVQLSHFDCGGVAVAFGISHKVADAATILSFIKDWAASTCDLSSSHDVSTPVLVSDSIFPRQDNIICGQFPASPNCVRKRFLFSPEAIERLKSKAIEFGIEKPTRVEVLTAFLCRCATVAGKSAAKNNNCGQSLPFAVIQAVNLRPLLELPKNSVGNLISIYFSTIKENDTVNIEQEFTKLVIGELRKAKDKLKNLSQEKLNYVARMQDFANCLKELDISSFFDMENVDIDAYLFSSWCRFPFYDIDFGLGKPIWVCMFQPHFKNCIILMDYPFGDDYGIEALITLEQEKMPAFENNELLLSFASN.

The active-site Proton acceptor is His157. Positions 215–222 (RKRFLFSP) match the Nuclear localization signal motif. Residues 316 to 343 (TKLVIGELRKAKDKLKNLSQEKLNYVAR) are a coiled coil. The active-site Proton acceptor is Asp384.

Belongs to the plant acyltransferase family. Monomer. In terms of tissue distribution, expressed in cortical cells of the root tip, especially in hairy roots, as well as in etiolated seedlings. Mostly expressed in roots, and, at lower levels, in leaves.

The protein localises to the cytoplasm. It is found in the nucleus. The enzyme catalyses (+)-minovincinine + acetyl-CoA = (+)-echitovenine + CoA. Its pathway is alkaloid biosynthesis. Its function is as follows. Component of the monoterpenoid indole alkaloids (MIAs, e.g. echitovenine, tabersonine, lochnericine, 19-hydroxytabersonine and horhammericine) biosynthetic pathway; MIAs are used in cancer treatment and other medical applications. Acyltransferase catalyzing the conversion of (+)-minovincinine to (+)-echitovenine. This is Minovincinine 19-hydroxy-O-acetyltransferase from Catharanthus roseus (Madagascar periwinkle).